The chain runs to 600 residues: Long-chain-fatty-acid--CoA ligase FadD15 (600 aa).

This sequence belongs to the ATP-dependent AMP-binding enzyme family.

It carries out the reaction a long-chain fatty acid + ATP + CoA = a long-chain fatty acyl-CoA + AMP + diphosphate. It participates in lipid metabolism; fatty acid biosynthesis. In terms of biological role, catalyzes the activation of long-chain fatty acids as acyl-coenzyme A (acyl-CoA), which are then transferred to the multifunctional polyketide synthase (PKS) type III for further chain extension. This is Long-chain-fatty-acid--CoA ligase FadD15 (fadD15) from Mycobacterium bovis (strain ATCC BAA-935 / AF2122/97).